We begin with the raw amino-acid sequence, 413 residues long: Phosphoglycerate kinase (413 aa).

Residues 19 to 21 (DLN), Arg34, 57 to 60 (HQSK), Arg114, and Arg154 each bind substrate. Residues Glu332 and 358 to 361 (GGHS) each bind ATP.

Belongs to the phosphoglycerate kinase family. In terms of assembly, monomer.

The protein resides in the cytoplasm. It catalyses the reaction (2R)-3-phosphoglycerate + ATP = (2R)-3-phospho-glyceroyl phosphate + ADP. It functions in the pathway carbohydrate degradation; glycolysis; pyruvate from D-glyceraldehyde 3-phosphate: step 2/5. The chain is Phosphoglycerate kinase from Thermococcus sibiricus (strain DSM 12597 / MM 739).